The chain runs to 471 residues: Sulfate adenylyltransferase subunit 1 (471 aa).

Positions 22–237 constitute a tr-type G domain; sequence KELLRFLTCG…LESVQITGAK (216 aa). Residues 31–38 are G1; it reads GSVDDGKS. GTP is bound at residue 31-38; it reads GSVDDGKS. The interval 89-93 is G2; it reads GITID. Residues 110 to 113 are G3; sequence DTPG. GTP is bound by residues 110–114 and 165–168; these read DTPGH and NKMD. The segment at 165–168 is G4; the sequence is NKMD. The G5 stretch occupies residues 202 to 204; it reads SAL.

This sequence belongs to the TRAFAC class translation factor GTPase superfamily. Classic translation factor GTPase family. CysN/NodQ subfamily. In terms of assembly, heterodimer composed of CysD, the smaller subunit, and CysN.

The enzyme catalyses sulfate + ATP + H(+) = adenosine 5'-phosphosulfate + diphosphate. The protein operates within sulfur metabolism; hydrogen sulfide biosynthesis; sulfite from sulfate: step 1/3. With CysD forms the ATP sulfurylase (ATPS) that catalyzes the adenylation of sulfate producing adenosine 5'-phosphosulfate (APS) and diphosphate, the first enzymatic step in sulfur assimilation pathway. APS synthesis involves the formation of a high-energy phosphoric-sulfuric acid anhydride bond driven by GTP hydrolysis by CysN coupled to ATP hydrolysis by CysD. The sequence is that of Sulfate adenylyltransferase subunit 1 from Saccharophagus degradans (strain 2-40 / ATCC 43961 / DSM 17024).